We begin with the raw amino-acid sequence, 100 residues long: Urease subunit gamma (100 aa).

The protein belongs to the urease gamma subunit family. In terms of assembly, heterotrimer of UreA (gamma), UreB (beta) and UreC (alpha) subunits. Three heterotrimers associate to form the active enzyme.

The protein resides in the cytoplasm. The catalysed reaction is urea + 2 H2O + H(+) = hydrogencarbonate + 2 NH4(+). Its pathway is nitrogen metabolism; urea degradation; CO(2) and NH(3) from urea (urease route): step 1/1. The chain is Urease subunit gamma from Agrobacterium fabrum (strain C58 / ATCC 33970) (Agrobacterium tumefaciens (strain C58)).